The chain runs to 60 residues: MAVPKQKRSSSRTHHKRAKIYKAFSVAVTTCPNCGAPKQPHRVCLRCGYYGKKQVFEVAK.

The protein belongs to the bacterial ribosomal protein bL32 family.

This is Large ribosomal subunit protein bL32 from Fervidobacterium nodosum (strain ATCC 35602 / DSM 5306 / Rt17-B1).